The sequence spans 574 residues: Proline--tRNA ligase (574 aa).

It belongs to the class-II aminoacyl-tRNA synthetase family. ProS type 1 subfamily. Homodimer.

It is found in the cytoplasm. The catalysed reaction is tRNA(Pro) + L-proline + ATP = L-prolyl-tRNA(Pro) + AMP + diphosphate. Its function is as follows. Catalyzes the attachment of proline to tRNA(Pro) in a two-step reaction: proline is first activated by ATP to form Pro-AMP and then transferred to the acceptor end of tRNA(Pro). As ProRS can inadvertently accommodate and process non-cognate amino acids such as alanine and cysteine, to avoid such errors it has two additional distinct editing activities against alanine. One activity is designated as 'pretransfer' editing and involves the tRNA(Pro)-independent hydrolysis of activated Ala-AMP. The other activity is designated 'posttransfer' editing and involves deacylation of mischarged Ala-tRNA(Pro). The misacylated Cys-tRNA(Pro) is not edited by ProRS. The chain is Proline--tRNA ligase from Pseudoalteromonas translucida (strain TAC 125).